Reading from the N-terminus, the 140-residue chain is Cytochrome c-type biogenesis protein CcmE (140 aa).

The Cytoplasmic segment spans residues Met1–Arg7. The helical; Signal-anchor for type II membrane protein transmembrane segment at Leu8 to Glu28 threads the bilayer. Residues Leu29 to Lys140 lie on the Periplasmic side of the membrane. 2 residues coordinate heme: His121 and Tyr125.

Belongs to the CcmE/CycJ family.

The protein resides in the cell inner membrane. Its function is as follows. Heme chaperone required for the biogenesis of c-type cytochromes. Transiently binds heme delivered by CcmC and transfers the heme to apo-cytochromes in a process facilitated by CcmF and CcmH. This Anaplasma marginale (strain Florida) protein is Cytochrome c-type biogenesis protein CcmE.